A 407-amino-acid chain; its full sequence is Probable tRNA sulfurtransferase (407 aa).

Positions asparagine 61–valine 165 constitute a THUMP domain. Residues methionine 183–leucine 184, histidine 208–phenylalanine 209, arginine 265, glycine 287, and glutamine 296 each bind ATP.

Belongs to the ThiI family.

It is found in the cytoplasm. It carries out the reaction [ThiI sulfur-carrier protein]-S-sulfanyl-L-cysteine + a uridine in tRNA + 2 reduced [2Fe-2S]-[ferredoxin] + ATP + H(+) = [ThiI sulfur-carrier protein]-L-cysteine + a 4-thiouridine in tRNA + 2 oxidized [2Fe-2S]-[ferredoxin] + AMP + diphosphate. The enzyme catalyses [ThiS sulfur-carrier protein]-C-terminal Gly-Gly-AMP + S-sulfanyl-L-cysteinyl-[cysteine desulfurase] + AH2 = [ThiS sulfur-carrier protein]-C-terminal-Gly-aminoethanethioate + L-cysteinyl-[cysteine desulfurase] + A + AMP + 2 H(+). The protein operates within cofactor biosynthesis; thiamine diphosphate biosynthesis. Functionally, catalyzes the ATP-dependent transfer of a sulfur to tRNA to produce 4-thiouridine in position 8 of tRNAs, which functions as a near-UV photosensor. Also catalyzes the transfer of sulfur to the sulfur carrier protein ThiS, forming ThiS-thiocarboxylate. This is a step in the synthesis of thiazole, in the thiamine biosynthesis pathway. The sulfur is donated as persulfide by IscS. In Staphylococcus aureus (strain N315), this protein is Probable tRNA sulfurtransferase.